The chain runs to 69 residues: Cytochrome c oxidase subunit 8A, mitochondrial (69 aa).

Residues 1-25 (MSVLTPLLLRGLTGSARRLPVPRAK) constitute a mitochondrion transit peptide. An SIFI-degron motif is present at residues 2–19 (SVLTPLLLRGLTGSARRL). Residues 26-36 (IHSLPPEGKLG) lie on the Mitochondrial matrix side of the membrane. The helical transmembrane segment at 37-60 (IMELAVGLTSCFVTFLLPAGWILS) threads the bilayer. The Mitochondrial intermembrane portion of the chain corresponds to 61–69 (HLETYRRPE).

This sequence belongs to the cytochrome c oxidase VIII family. Component of the cytochrome c oxidase (complex IV, CIV), a multisubunit enzyme composed of 14 subunits. The complex is composed of a catalytic core of 3 subunits MT-CO1, MT-CO2 and MT-CO3, encoded in the mitochondrial DNA, and 11 supernumerary subunits COX4I1 (or COX4I2), COX5A, COX5B, COX6A1 (or COX6A2), COX6B1 (or COX6B2), COX6C, COX7A2 (or COX7A1), COX7B, COX7C, COX8A and NDUFA4, which are encoded in the nuclear genome. The complex exists as a monomer or a dimer and forms supercomplexes (SCs) in the inner mitochondrial membrane with NADH-ubiquinone oxidoreductase (complex I, CI) and ubiquinol-cytochrome c oxidoreductase (cytochrome b-c1 complex, complex III, CIII), resulting in different assemblies (supercomplex SCI(1)III(2)IV(1) and megacomplex MCI(2)III(2)IV(2)). In terms of processing, in response to mitochondrial stress, the precursor protein is ubiquitinated by the SIFI complex in the cytoplasm before mitochondrial import, leading to its degradation. Within the SIFI complex, UBR4 initiates ubiquitin chain that are further elongated or branched by KCMF1. As to expression, widely expressed.

It is found in the mitochondrion inner membrane. It participates in energy metabolism; oxidative phosphorylation. Component of the cytochrome c oxidase, the last enzyme in the mitochondrial electron transport chain which drives oxidative phosphorylation. The respiratory chain contains 3 multisubunit complexes succinate dehydrogenase (complex II, CII), ubiquinol-cytochrome c oxidoreductase (cytochrome b-c1 complex, complex III, CIII) and cytochrome c oxidase (complex IV, CIV), that cooperate to transfer electrons derived from NADH and succinate to molecular oxygen, creating an electrochemical gradient over the inner membrane that drives transmembrane transport and the ATP synthase. Cytochrome c oxidase is the component of the respiratory chain that catalyzes the reduction of oxygen to water. Electrons originating from reduced cytochrome c in the intermembrane space (IMS) are transferred via the dinuclear copper A center (CU(A)) of subunit 2 and heme A of subunit 1 to the active site in subunit 1, a binuclear center (BNC) formed by heme A3 and copper B (CU(B)). The BNC reduces molecular oxygen to 2 water molecules using 4 electrons from cytochrome c in the IMS and 4 protons from the mitochondrial matrix. The polypeptide is Cytochrome c oxidase subunit 8A, mitochondrial (COX8A) (Homo sapiens (Human)).